Here is a 208-residue protein sequence, read N- to C-terminus: Germin-like protein subfamily 3 member 1 (208 aa).

The signal sequence occupies residues 1-18; sequence MLRTIFLLSLLFALSNAS. Cys23 and Cys38 are oxidised to a cystine. One can recognise a Cupin type-1 domain in the interval 52 to 198; the sequence is SGLGTPGNTT…TTFLDATTVK (147 aa). The N-linked (GlcNAc...) asparagine glycan is linked to Asn59. The Mn(2+) site is built by His100, His102, Glu107, and His146.

Belongs to the germin family. As to quaternary structure, may not form oligomer. As to expression, expressed during germination, and also in green shoots, etiolated seedlings and whole seedlings.

It localises to the secreted. The protein resides in the extracellular space. The protein localises to the apoplast. In terms of biological role, may play a role in plant defense. Probably has no oxalate oxidase activity even if the active site is conserved. In Arabidopsis thaliana (Mouse-ear cress), this protein is Germin-like protein subfamily 3 member 1 (GLP1).